Consider the following 501-residue polypeptide: Glucan endo-1,3-beta-glucosidase 3 (501 aa).

An N-terminal signal peptide occupies residues 1–18; it reads MAALLLLFLFLFASSALS. Residues asparagine 88 and asparagine 107 are each glycosylated (N-linked (GlcNAc...) asparagine). The active-site Proton donor is glutamate 116. Asparagine 171 and asparagine 253 each carry an N-linked (GlcNAc...) asparagine glycan. The active-site Nucleophile is glutamate 263. Residues asparagine 295, asparagine 353, and asparagine 357 are each glycosylated (N-linked (GlcNAc...) asparagine). A disulfide bridge connects residues cysteine 361 and cysteine 424. Residues asparagine 451, asparagine 456, asparagine 457, and asparagine 466 are each glycosylated (N-linked (GlcNAc...) asparagine). The GPI-anchor amidated serine moiety is linked to residue serine 470. A propeptide spans 471-501 (removed in mature form); sequence GCIPKYYHHPHASFGDLTLLSLLLIIALVFL.

It belongs to the glycosyl hydrolase 17 family. Contains two additional disulfide bonds.

The protein resides in the cell membrane. The catalysed reaction is Hydrolysis of (1-&gt;3)-beta-D-glucosidic linkages in (1-&gt;3)-beta-D-glucans.. This chain is Glucan endo-1,3-beta-glucosidase 3, found in Arabidopsis thaliana (Mouse-ear cress).